The chain runs to 291 residues: 3-methylcatechol 2,3-dioxygenase (291 aa).

2 consecutive VOC domains span residues 5–119 and 143–264; these read RLGY…IYYG and GLGH…YGWG. Fe cation-binding residues include histidine 146, histidine 210, and glutamate 260.

It belongs to the extradiol ring-cleavage dioxygenase family. As to quaternary structure, homooctamer. Fe(2+) serves as cofactor.

It catalyses the reaction 3-methylcatechol + O2 = 2-hydroxy-6-oxo-2,4-heptadienoate + H(+). It functions in the pathway xenobiotic degradation; toluene degradation. This Pseudomonas putida (strain ATCC 700007 / DSM 6899 / JCM 31910 / BCRC 17059 / LMG 24140 / F1) protein is 3-methylcatechol 2,3-dioxygenase (todE).